The chain runs to 525 residues: MIFRSVSNTDFRARVRTLLLAGSTALAFVAAPVWAFSIDDVASKAKDLAGDKYSAPTSNLPSEFSEMKFADYQQIRFINERAYWGKLKTPFKLSFYHQGMHFDTPVKINEVTATTVKPIKYDRTKFDFGSLKFDENATKDLGYAGFRVLYPINQADKQDEIATFLGASYFRVVGKGQVYGLSARGLAIDTALPSGEEFPRFREFWIERPKAQDKQLVIYALLDSPRATGAYRFVLRPGKDAVMDVQARVFLREKVSKLGLAPLTSMYLFGSNQPSEQHNFRPELHDSSGLQIHAGNGEWLWRPLNNPKHLSVSTFSVENPKGFGLLQRGREFSRYEDLDDRYDLRPSAWIEPKGDWGKGTVELVEIPTPDETNDNIVAFWNPETQPEVGKPLDFAYRLHWTMDEDELHDPKSSWVKQTMRSVGDVKQKNLIRQQDGSTALVVDFEGPALKDLAPDAPVTTQVSTDSNAEVVENSLRYNPVLKGWRLTLRIKVKDPKKPVEMRAALVDEAQKPLSETWSYQLPADE.

Positions 1–35 are cleaved as a signal peptide; the sequence is MIFRSVSNTDFRARVRTLLLAGSTALAFVAAPVWA.

This sequence belongs to the OpgD/OpgG family.

It localises to the periplasm. It functions in the pathway glycan metabolism; osmoregulated periplasmic glucan (OPG) biosynthesis. In terms of biological role, involved in the biosynthesis of osmoregulated periplasmic glucans (OPGs). The polypeptide is Glucans biosynthesis protein G (Pseudomonas paraeruginosa (strain DSM 24068 / PA7) (Pseudomonas aeruginosa (strain PA7))).